Here is a 492-residue protein sequence, read N- to C-terminus: Solute carrier family 2, facilitated glucose transporter member 1 (492 aa).

Methionine 1 carries the N-acetylmethionine modification. Residues 1–11 (MEPSSKKLTGR) lie on the Cytoplasmic side of the membrane. Residues 12-33 (LMLAVGGAVLGSLQFGYNTGVI) traverse the membrane as a helical segment. The Extracellular portion of the chain corresponds to 34-66 (NAPQKVIEEFYNQTWVHRYGESILPTTLTTLWS). Residue asparagine 45 is glycosylated (N-linked (GlcNAc...) asparagine). A helical membrane pass occupies residues 67-87 (LSVAIFSVGGMIGSFSVGLFV). Over 88-90 (NRF) the chain is Cytoplasmic. The chain crosses the membrane as a helical span at residues 91–112 (GRRNSMLMMNLLAFVSAVLMGF). Over 113 to 120 (SKLGKSFE) the chain is Extracellular. The helical transmembrane segment at 121 to 144 (MLILGRFIIGVYCGLTTGFVPMYV) threads the bilayer. Residue threonine 137 participates in cytochalasin B binding. The Cytoplasmic portion of the chain corresponds to 145–155 (GEVSPTALRGA). A helical transmembrane segment spans residues 156–176 (LGTLHQLGIVVGILIAQVFGL). The Extracellular segment spans residues 177 to 185 (DSIMGNKDL). Residues 186–206 (WPLLLSIIFIPALLQCIVLPF) form a helical membrane-spanning segment. The Cytoplasmic portion of the chain corresponds to 207 to 271 (CPESPRFLLI…LFRSPAYRQP (65 aa)). Serine 226 is subject to Phosphoserine; by PKC/PRKCB. The chain crosses the membrane as a helical span at residues 272 to 293 (ILIAVVLQLSQQLSGINAVFYY). Glutamine 282 contacts cytochalasin B. D-glucose-binding positions include 282-283 (QQ) and asparagine 288. Residues 294-306 (STSIFEKAGVQQP) lie on the Extracellular side of the membrane. The chain crosses the membrane as a helical span at residues 307-328 (VYATIGSGIVNTAFTVVSLFVV). Residue asparagine 317 participates in D-glucose binding. The Cytoplasmic segment spans residues 329–334 (ERAGRR). The chain crosses the membrane as a helical span at residues 335–355 (TLHLIGLAGMAGCAILMTIAL). The Extracellular portion of the chain corresponds to 356-365 (ALLEQLPWMS). The chain crosses the membrane as a helical span at residues 366–388 (YLSIVAIFGFVAFFEVGPGPIPW). Glutamate 380 contacts D-glucose. Position 388 (tryptophan 388) interacts with cytochalasin B. At 389 to 401 (FIVAELFSQGPRP) the chain is on the cytoplasmic side. The helical transmembrane segment at 402 to 422 (AAIAVAGFSNWTSNFIVGMCF) threads the bilayer. Residue asparagine 411 participates in cytochalasin B binding. The Extracellular portion of the chain corresponds to 423-429 (QYVEQLC). The chain crosses the membrane as a helical span at residues 430-450 (GPYVFIIFTVLLVLFFIFTYF). The Cytoplasmic portion of the chain corresponds to 451–492 (KVPETKGRTFDEIASGFRQGGASQSDKTPEELFHPLGADSQV). Serine 465 is modified (phosphoserine). A disordered region spans residues 468–492 (RQGGASQSDKTPEELFHPLGADSQV). Residue threonine 478 is modified to Phosphothreonine. A Phosphoserine modification is found at serine 490.

The protein belongs to the major facilitator superfamily. Sugar transporter (TC 2.A.1.1) family. Glucose transporter subfamily. In terms of assembly, interacts with GIPC (via PDZ domain). Found in a complex with ADD2, DMTN and SLC2A1. Interacts (via C-terminus cytoplasmic region) with DMTN isoform 2. Interacts with SNX27; the interaction is required when endocytosed to prevent degradation in lysosomes and promote recycling to the plasma membrane. Interacts with STOM. Interacts with SGTA (via Gln-rich region). Interacts with isoform 1 of BSG. Phosphorylation at Ser-226 by PKC promotes glucose uptake by increasing cell membrane localization. In terms of tissue distribution, detected in erythrocytes (at protein level). Expressed at variable levels in many human tissues.

The protein resides in the cell membrane. It is found in the melanosome. It localises to the photoreceptor inner segment. The catalysed reaction is D-glucose(out) = D-glucose(in). It participates in carbohydrate degradation. The uptake of glucose is inhibited by cytochalasin B and Phe-amide core-scaffold inhibitors GLUT-i1 and GLUT-i2. These inhibitors bind in the central cavity of the inward-open state and overlap the glucose-binding site. Glucose uptake is increased in response to phorbol ester 12-O-tetradecanoylphorbol-13-acetate (TPA) treatment: TPA-induced glucose uptake requires phosphorylation at Ser-226. Interacts with SMIM43; the interaction may promote SLC2A1-mediated glucose transport to meet the energy needs of mesendoderm differentiation. Functionally, facilitative glucose transporter, which is responsible for constitutive or basal glucose uptake. Has a very broad substrate specificity; can transport a wide range of aldoses including both pentoses and hexoses. Most important energy carrier of the brain: present at the blood-brain barrier and assures the energy-independent, facilitative transport of glucose into the brain. In association with BSG and NXNL1, promotes retinal cone survival by increasing glucose uptake into photoreceptors. Required for mesendoderm differentiation. This is Solute carrier family 2, facilitated glucose transporter member 1 from Homo sapiens (Human).